A 1700-amino-acid polypeptide reads, in one-letter code: Rho guanine nucleotide exchange factor 28 (1700 aa).

The tract at residues 288-335 is disordered; that stretch reads TERATMPSGAAETEEEVRNLESGRSPSEEEEDGQLVKSQADGPSEQED. A phosphoserine mark is found at Ser-312, Ser-314, and Ser-478. Residues 483–525 are disordered; sequence VADSEEEGRSEPPICYAVGSQSSPRTGLPGGDELDSFDANTEP. The residue at position 623 (Ser-623) is a Phosphoserine. The segment at 651–698 adopts a Phorbol-ester/DAG-type zinc-finger fold; the sequence is RHQFVPGTFSGVLQCSGCDKTLLGKESLQCANCKANTHKGCKDTVPPC. The segment covering 709-720 has biased composition (polar residues); the sequence is NKPQTILGSSSV. Disordered stretches follow at residues 709–761 and 774–799; these read NKPQ…VPGT and ESEGDSNSWRSRSHSDELFQSMGSSP. The span at 728–737 shows a compositional bias: low complexity; that stretch reads LSLHPSPSMP. Over residues 774-783 the composition is skewed to polar residues; the sequence is ESEGDSNSWR. The region spanning 848-1043 is the DH domain; it reads KRQDVIFELM…KDMIAAVDLK (196 aa). The 103-residue stretch at 1085–1187 folds into the PH domain; it reads ALLHDGLVYW…WMRRIQQAVE (103 aa). Positions 1186-1207 are disordered; sequence VESCPEEEGGRTSESDEERRKA. The span at 1193–1207 shows a compositional bias: basic and acidic residues; sequence EGGRTSESDEERRKA. An interaction with PTK2/FAK1; required for regulation of axonal branching and synapse formation region spans residues 1294–1303; it reads DVSQPSEEGP. Residues 1369–1380 form a mediates cytoplasmic retention and interaction with YWHAH region; the sequence is IIQAIQNLTRLL. An interaction with microtubules region spans residues 1421–1700; the sequence is QEKSRYLEKH…DGAEENIVYL (280 aa). Residues 1473–1522 adopt a coiled-coil conformation; the sequence is ERECQSQEELLLRHRSELDHQLQEYQQNLERLREGQRMVERERQRMRDQQ. An RNA-binding region spans residues 1493-1524; the sequence is QLQEYQQNLERLREGQRMVERERQRMRDQQGL. Ser-1535 bears the Phosphoserine mark. The tract at residues 1563–1576 is mediates cytoplasmic retention and interaction with MAPK8IP1; that stretch reads FLNDAFTHMSLNTS. Residues 1574–1598 are disordered; that stretch reads NTSNKPNPSGAPWDAHPPGGSHLDL. Residue Ser-1604 is modified to Phosphoserine. Residues 1612–1700 are disordered; that stretch reads VSQPSDVNSE…DGAEENIVYL (89 aa). Polar residues predominate over residues 1613-1623; sequence SQPSDVNSELW. The segment covering 1633–1642 has biased composition (basic and acidic residues); it reads ARQESIKDSC. A compositionally biased stretch (polar residues) spans 1647 to 1672; that stretch reads DLNSFQTESPDPQDSNQRGPQPQTLI.

Homooligomer; forms cytoplasmic aggregates. Forms a complex with MAPK8 and MAPK8IP1. Interacts with RHOA. Interacts with microtubules. Interacts with YWHAE and YWHAH. Interacts with PTK2/FAK1. Interacts with NEFL. Interacts with CTNND2; prevents interaction with RHOA. Phosphorylated on tyrosine upon stimulation of cells by laminin.

The protein localises to the cytoplasm. Its subcellular location is the cell membrane. In terms of biological role, functions as a RHOA-specific guanine nucleotide exchange factor regulating signaling pathways downstream of integrins and growth factor receptors. Functions in axonal branching, synapse formation and dendritic morphogenesis. Also functions in focal adhesion formation, cell motility and B-lymphocytes activation. May regulate NEFL expression and aggregation and play a role in apoptosis. The protein is Rho guanine nucleotide exchange factor 28 (Arhgef28) of Rattus norvegicus (Rat).